Reading from the N-terminus, the 42-residue chain is Photosystem I reaction center subunit IX (42 aa).

Residues 7–27 (YLSVAPVLSTLWFGSLAGLLI) form a helical membrane-spanning segment.

It belongs to the PsaJ family.

The protein localises to the plastid. The protein resides in the chloroplast thylakoid membrane. Its function is as follows. May help in the organization of the PsaE and PsaF subunits. This chain is Photosystem I reaction center subunit IX, found in Daucus carota (Wild carrot).